The sequence spans 300 residues: Enoyl-CoA hydratase domain-containing protein 3, mitochondrial (300 aa).

The transit peptide at 1-66 (MAVVAGLRAF…RNIVLSNPRR (66 aa)) directs the protein to the mitochondrion. The interval 34 to 53 (GSAGPAGSESEPRLTSTRQQ) is disordered. Lysine 110 carries the post-translational modification N6-succinyllysine.

Belongs to the enoyl-CoA hydratase/isomerase family.

The protein localises to the mitochondrion. May play a role in fatty acid biosynthesis and insulin sensitivity. This is Enoyl-CoA hydratase domain-containing protein 3, mitochondrial from Mus musculus (Mouse).